A 113-amino-acid polypeptide reads, in one-letter code: Large ribosomal subunit protein uL22 (113 aa).

It belongs to the universal ribosomal protein uL22 family. Part of the 50S ribosomal subunit.

Functionally, this protein binds specifically to 23S rRNA; its binding is stimulated by other ribosomal proteins, e.g. L4, L17, and L20. It is important during the early stages of 50S assembly. It makes multiple contacts with different domains of the 23S rRNA in the assembled 50S subunit and ribosome. The globular domain of the protein is located near the polypeptide exit tunnel on the outside of the subunit, while an extended beta-hairpin is found that lines the wall of the exit tunnel in the center of the 70S ribosome. This is Large ribosomal subunit protein uL22 from Geobacillus stearothermophilus (Bacillus stearothermophilus).